A 199-amino-acid polypeptide reads, in one-letter code: Proteasome subunit beta 2 (199 aa).

A propeptide spans 1 to 6 (removed in mature form; by autocatalysis); sequence MEKKTG. Thr-7 acts as the Nucleophile in catalysis.

It belongs to the peptidase T1B family. The 20S proteasome core is composed of 14 alpha and 14 beta subunits that assemble into four stacked heptameric rings, resulting in a barrel-shaped structure. The two inner rings, each composed of seven catalytic beta subunits, are sandwiched by two outer rings, each composed of seven alpha subunits. The catalytic chamber with the active sites is on the inside of the barrel. Has a gated structure, the ends of the cylinder being occluded by the N-termini of the alpha-subunits. Is capped at one or both ends by the proteasome regulatory ATPase, PAN.

It is found in the cytoplasm. The enzyme catalyses Cleavage of peptide bonds with very broad specificity.. The formation of the proteasomal ATPase PAN-20S proteasome complex, via the docking of the C-termini of PAN into the intersubunit pockets in the alpha-rings, triggers opening of the gate for substrate entry. Interconversion between the open-gate and close-gate conformations leads to a dynamic regulation of the 20S proteasome proteolysis activity. Its function is as follows. Component of the proteasome core, a large protease complex with broad specificity involved in protein degradation. The polypeptide is Proteasome subunit beta 2 (Thermococcus kodakarensis (strain ATCC BAA-918 / JCM 12380 / KOD1) (Pyrococcus kodakaraensis (strain KOD1))).